The chain runs to 396 residues: Ribosomal RNA large subunit methyltransferase I (396 aa).

In terms of domain architecture, PUA spans 2–79; that stretch reads SIRIKLKPGR…KEEAIDRDFF (78 aa).

Belongs to the methyltransferase superfamily. RlmI family.

It is found in the cytoplasm. It catalyses the reaction cytidine(1962) in 23S rRNA + S-adenosyl-L-methionine = 5-methylcytidine(1962) in 23S rRNA + S-adenosyl-L-homocysteine + H(+). Functionally, specifically methylates the cytosine at position 1962 (m5C1962) of 23S rRNA. This Shewanella amazonensis (strain ATCC BAA-1098 / SB2B) protein is Ribosomal RNA large subunit methyltransferase I.